Reading from the N-terminus, the 353-residue chain is Basic membrane protein C (353 aa).

The N-terminal stretch at 1–16 (MFKRFIFITLSLLVFA) is a signal peptide. Cys17 is lipidated: N-palmitoyl cysteine. Cys17 is lipidated: S-diacylglycerol cysteine.

It belongs to the BMP lipoprotein family. As to quaternary structure, monomer.

The protein localises to the cell inner membrane. In terms of biological role, may be part of an ABC-type nucleoside uptake system involved in the purine salvage pathway. This chain is Basic membrane protein C (bmpC), found in Borreliella burgdorferi (strain ATCC 35210 / DSM 4680 / CIP 102532 / B31) (Borrelia burgdorferi).